A 155-amino-acid polypeptide reads, in one-letter code: Small ribosomal subunit protein uS7 (155 aa).

Belongs to the universal ribosomal protein uS7 family. Part of the 30S ribosomal subunit. Contacts proteins S9 and S11.

One of the primary rRNA binding proteins, it binds directly to 16S rRNA where it nucleates assembly of the head domain of the 30S subunit. Is located at the subunit interface close to the decoding center, probably blocks exit of the E-site tRNA. This is Small ribosomal subunit protein uS7 from Fervidobacterium nodosum (strain ATCC 35602 / DSM 5306 / Rt17-B1).